We begin with the raw amino-acid sequence, 400 residues long: ATP-dependent rRNA helicase RRP3 (400 aa).

The Q motif motif lies at 1–29 (MEFGDLRIDESLIKTCQEKGITRPTEVQR). Residues 32–202 (IPAVLGGGDV…SSILKRPKTI (171 aa)) enclose the Helicase ATP-binding domain. 45–52 (SQTGSGKT) lines the ATP pocket. A DEAD box motif is present at residues 150-153 (DEAD). In terms of domain architecture, Helicase C-terminal spans 229–373 (ALVELLEMSQ…EFKMMKKNFG (145 aa)).

Belongs to the DEAD box helicase family. DDX47/RRP3 subfamily. Interacts with the SSU processome.

It is found in the nucleus. It catalyses the reaction ATP + H2O = ADP + phosphate + H(+). Its function is as follows. ATP-dependent rRNA helicase required for pre-ribosomal RNA processing. Involved in the maturation of the 35S-pre-rRNA and to its cleavage to mature 18S rRNA. The protein is ATP-dependent rRNA helicase RRP3 of Encephalitozoon cuniculi (strain GB-M1) (Microsporidian parasite).